Here is a 62-residue protein sequence, read N- to C-terminus: UPF0370 protein plu2724 (62 aa).

The helical transmembrane segment at 3 to 23 threads the bilayer; that stretch reads WLADYWWIILILLVGVLLNAI. The tract at residues 36–62 is disordered; sequence DNKPELPPHRDLNSKWDDEDDWPQKKP.

Belongs to the UPF0370 family.

Its subcellular location is the cell membrane. This is UPF0370 protein plu2724 from Photorhabdus laumondii subsp. laumondii (strain DSM 15139 / CIP 105565 / TT01) (Photorhabdus luminescens subsp. laumondii).